We begin with the raw amino-acid sequence, 510 residues long: NAD(P)H-quinone oxidoreductase subunit 2 B, chloroplastic (510 aa).

A run of 13 helical transmembrane segments spans residues 24–44 (LLLF…GLIL), 57–77 (IPWF…ALLF), 99–119 (IFQF…VEYI), 124–144 (MAIT…MFLC), 149–169 (LITI…LSGY), 183–203 (YLLM…WLYG), 227–247 (PGIL…LSLA), 295–315 (WHLL…LIAI), 323–343 (MLAY…IVGD), 354–374 (YMLF…LFGL), 395–415 (ALSL…AGFF), 428–448 (GLYF…YYYL), and 484–504 (MIVC…IIAI).

Belongs to the complex I subunit 2 family. NDH is composed of at least 16 different subunits, 5 of which are encoded in the nucleus.

It is found in the plastid. Its subcellular location is the chloroplast thylakoid membrane. The catalysed reaction is a plastoquinone + NADH + (n+1) H(+)(in) = a plastoquinol + NAD(+) + n H(+)(out). The enzyme catalyses a plastoquinone + NADPH + (n+1) H(+)(in) = a plastoquinol + NADP(+) + n H(+)(out). Its function is as follows. NDH shuttles electrons from NAD(P)H:plastoquinone, via FMN and iron-sulfur (Fe-S) centers, to quinones in the photosynthetic chain and possibly in a chloroplast respiratory chain. The immediate electron acceptor for the enzyme in this species is believed to be plastoquinone. Couples the redox reaction to proton translocation, and thus conserves the redox energy in a proton gradient. The sequence is that of NAD(P)H-quinone oxidoreductase subunit 2 B, chloroplastic from Eucalyptus globulus subsp. globulus (Tasmanian blue gum).